A 622-amino-acid chain; its full sequence is Phosphoribomutase (622 aa).

Substrate-binding positions include Thr57, Arg61, 158–159 (SH), and Lys168. Ser158 (phosphoserine intermediate) is an active-site residue. A Mg(2+)-binding site is contributed by Ser158. At Ser158 the chain carries Phosphoserine. The Mg(2+) site is built by Asp325, Asp327, and Asp329. Substrate contacts are provided by residues 329-330 (DR), Thr404, 428-430 (EEA), and Lys442.

This sequence belongs to the phosphohexose mutase family. Mg(2+) is required as a cofactor.

It is found in the cytoplasm. The protein resides in the nucleus. The catalysed reaction is alpha-D-ribose 1-phosphate = D-ribose 5-phosphate. Its function is as follows. Major phosphoribomutase that converts ribose 1-phosphate to ribose 5-phosphate. Involved in ribose salvage via the pentose phosphate pathway. The sequence is that of Phosphoribomutase from Saccharomyces cerevisiae (strain ATCC 204508 / S288c) (Baker's yeast).